Reading from the N-terminus, the 582-residue chain is MKSDIEICQTATLTRMKTIASNLGLHDDDITPQGPFKAKVNIDALKRLKSEPNGKLILVSAITPTPLGEGKTVTTIGLAQGLAKLGESVSACIRQPSMGPVFGVKGGAAGGGYSQVAPMEELNLHLTGDIHAITAAHNLASAAIDARIYHEQRLGYDVFSEKNELPALRIDPQHVVWKRVMDHNDRALRMVTIGKNEDGKTINGYEREDGFDITAASELMAILALATDLQDLRQRIGRIVVAYNLDGEPVTTEDLQVAGAMTVTMKFAINPTLMQTLEGVPTFVHSGPFANIAHGNSSIIADNIALKLTDYTVTEGGFGSDMGFEKACNIKAPLSEKSPDCAVLVATLRGIKANSGLFPLSPGQSLPKELFAPNKEALDAGLDNLLWHINNCAKYGLPVVVAINRFPEDTQEELDSLLNWVSNLDMNVDVAISEAFVKGGNGTLELAEKVIKACQQETQFTPLYTSEMSLFDKLNAVAIKGYGAERIELSEKAQQQLATFEKLGYQSLSVCMAKTPASISTDGNIKGAPTDFIVPIRELKLCAGAGFIYALCGNVMTMPGLPEKPAFMNLDIDGDGNIVGLS.

65 to 72 (TPLGEGKT) contributes to the ATP binding site.

The protein belongs to the formate--tetrahydrofolate ligase family.

It carries out the reaction (6S)-5,6,7,8-tetrahydrofolate + formate + ATP = (6R)-10-formyltetrahydrofolate + ADP + phosphate. It participates in one-carbon metabolism; tetrahydrofolate interconversion. In Aliivibrio fischeri (strain ATCC 700601 / ES114) (Vibrio fischeri), this protein is Formate--tetrahydrofolate ligase.